The following is a 341-amino-acid chain: Paired box protein Pax-9 (341 aa).

The segment at residues 4–130 (AFGEVNQLGG…SSISRILRNK (127 aa)) is a DNA-binding region (paired). Residues 7 to 63 (EVNQLGGVFVNGRPLPNAIRLRIVELAQLGIRPCDISRQLRVSHGCVSKILARYNET) form a PAI subdomain region. The RED subdomain stretch occupies residues 82 to 130 (TVVKHIRTYKQRDPGIFAWEIRDRLLADGVCDKYNVPSVSSISRILRNK). The tract at residues 168–189 (AAAAKVPTPPGVPAIPGSVAMP) is interaction with KDM5B.

As to quaternary structure, interacts with KDM5B.

It localises to the nucleus. Transcription factor required for normal development of thymus, parathyroid glands, ultimobranchial bodies, teeth, skeletal elements of skull and larynx as well as distal limbs. The polypeptide is Paired box protein Pax-9 (PAX9) (Saimiri boliviensis boliviensis (Bolivian squirrel monkey)).